Consider the following 265-residue polypeptide: Tryptophan 2,3-dioxygenase (265 aa).

Substrate is bound by residues 38–42 and Arg-104; that span reads FIVVH. His-223 provides a ligand contact to heme. Thr-237 contacts substrate.

This sequence belongs to the tryptophan 2,3-dioxygenase family. As to quaternary structure, homotetramer. Heme serves as cofactor.

The enzyme catalyses L-tryptophan + O2 = N-formyl-L-kynurenine. It participates in amino-acid degradation; L-tryptophan degradation via kynurenine pathway; L-kynurenine from L-tryptophan: step 1/2. Functionally, heme-dependent dioxygenase that catalyzes the oxidative cleavage of the L-tryptophan (L-Trp) pyrrole ring and converts L-tryptophan to N-formyl-L-kynurenine. Catalyzes the oxidative cleavage of the indole moiety. This Anaeromyxobacter sp. (strain K) protein is Tryptophan 2,3-dioxygenase.